The sequence spans 698 residues: Transferrin-binding protein B (698 aa).

The signal sequence occupies residues 1-20; it reads MNNPLVNQAAMVLPVFLLSA. Cys-21 is lipidated: N-palmitoyl cysteine. Cys-21 is lipidated: S-diacylglycerol cysteine. Disordered regions lie at residues 33–58, 83–102, 294–324, 349–383, 428–479, and 669–698; these read VDTE…QKDQ, IKLS…KNPS, FSGK…SLSG, GSAK…SENS, ESGK…GDAN, and TKNA…KPVQ. Residues 46–56 show a composition bias toward polar residues; it reads DVSSEKPQAQK. The segment covering 299-315 has biased composition (basic and acidic residues); sequence EATDKPKNDGETKEHPF. Residues 369-383 show a composition bias toward low complexity; sequence AAASNGAAGTSSENS. Over residues 460–476 the composition is skewed to polar residues; that stretch reads QAGTAENGNPAASNTAG. Over residues 671–686 the composition is skewed to low complexity; it reads NATDASGNGNSASSAT.

This sequence belongs to the TbpB family. Binds only human holo-transferrin (TF), via the TF C-terminus. Forms a large complex with TbpA and TF. Interacts via its C-terminal domain with Slam1.

It localises to the cell outer membrane. The protein resides in the cell surface. Its function is as follows. Neisseria acquires iron by extracting it from serum transferrin (TF) in its human host. Acts as a TF receptor and is required for TF utilization. Involved in the initial capture of TF. Helps select only those TF molecules that can be used as an iron source and concentrates them on the cell surface, maintaining the iron-loaded status of the TF C-terminal lobe until its delivery to TbpA. In Neisseria meningitidis serogroup A / serotype 4A (strain DSM 15465 / Z2491), this protein is Transferrin-binding protein B.